We begin with the raw amino-acid sequence, 86 residues long: Putative antitoxin VapB5 (86 aa).

It belongs to the phD/YefM antitoxin family. In terms of assembly, forms a complex with VapC5.

Its function is as follows. Probable antitoxin component of a probable type II toxin-antitoxin (TA) system. The cognate toxin is VapC5. The polypeptide is Putative antitoxin VapB5 (vapB5) (Mycobacterium tuberculosis (strain CDC 1551 / Oshkosh)).